Reading from the N-terminus, the 221-residue chain is GTP cyclohydrolase III (221 aa).

Belongs to the archaeal-type GTP cyclohydrolase family.

The catalysed reaction is GTP + 3 H2O = 2-amino-5-formylamino-6-(5-phospho-D-ribosylamino)pyrimidin-4(3H)-one + 2 phosphate + 2 H(+). Functionally, catalyzes the formation of 2-amino-5-formylamino-6-ribofuranosylamino-4(3H)-pyrimidinone ribonucleotide monophosphate and inorganic phosphate from GTP. Also has an independent pyrophosphate phosphohydrolase activity. This is GTP cyclohydrolase III from Pyrobaculum neutrophilum (strain DSM 2338 / JCM 9278 / NBRC 100436 / V24Sta) (Thermoproteus neutrophilus).